Here is a 219-residue protein sequence, read N- to C-terminus: Small ribosomal subunit protein uS3 (219 aa).

One can recognise a KH type-2 domain in the interval 39–107 (LRKFLKKKLH…EVLIDIQEVR (69 aa)).

This sequence belongs to the universal ribosomal protein uS3 family. Part of the 30S ribosomal subunit. Forms a tight complex with proteins S10 and S14.

Functionally, binds the lower part of the 30S subunit head. Binds mRNA in the 70S ribosome, positioning it for translation. This chain is Small ribosomal subunit protein uS3, found in Desulfatibacillum aliphaticivorans.